Consider the following 31-residue polypeptide: Photosystem II reaction center protein T (31 aa).

The chain crosses the membrane as a helical span at residues 3–23; sequence SFAYVLILTLAIATLFFAIAF.

It belongs to the PsbT family. In terms of assembly, PSII is composed of 1 copy each of membrane proteins PsbA, PsbB, PsbC, PsbD, PsbE, PsbF, PsbH, PsbI, PsbJ, PsbK, PsbL, PsbM, PsbT, PsbX, PsbY, PsbZ, Psb30/Ycf12, peripheral proteins PsbO, CyanoQ (PsbQ), PsbU, PsbV and a large number of cofactors. It forms dimeric complexes.

It is found in the cellular thylakoid membrane. Functionally, found at the monomer-monomer interface of the photosystem II (PS II) dimer, plays a role in assembly and dimerization of PSII. PSII is a light-driven water plastoquinone oxidoreductase, using light energy to abstract electrons from H(2)O, generating a proton gradient subsequently used for ATP formation. The polypeptide is Photosystem II reaction center protein T (Parasynechococcus marenigrum (strain WH8102)).